The sequence spans 1026 residues: Maternal effect protein staufen (1026 aa).

A compositionally biased stretch (basic residues) spans 16–29 (AAHHHSHSHAHMHL). Disordered regions lie at residues 16–159 (AAHH…QLPP), 190–210 (NHYG…SNYA), and 234–311 (TPVP…KDKT). Positions 70 to 111 (AQQQQQQQTSSNQAGAVAAAGAAYHHGNINSNSGSNISSNSN) are enriched in low complexity. The span at 112 to 126 (QMQKIRQQHQHLSSS) shows a compositional bias: polar residues. Low complexity-rich tracts occupy residues 192 to 210 (YGSN…SNYA) and 234 to 256 (TPVP…NSTV). The segment covering 267–284 (TSQKPETRQEPASADDHV) has biased composition (basic and acidic residues). The span at 285-303 (STGNIDATGALSNEDTSSS) shows a compositional bias: polar residues. DRBM domains follow at residues 311-378 (TPMC…ETMY) and 490-557 (PKFP…VLKT). Phosphoserine occurs at positions 563 and 570. Residues 578–645 (SPISQVHEIG…AEKMLVELQK (68 aa)) enclose the DRBM 3 domain. RNA-binding residues include histidine 606, lysine 608, lysine 628, lysine 629, and lysine 632. Positions 647–707 (PPLTPTKQTP…PPKDKLIDMD (61 aa)) are disordered. 2 positions are modified to phosphothreonine: threonine 650 and threonine 655. A Phosphoserine modification is found at serine 676. The span at 678–688 (VSGTDGPTQTG) shows a compositional bias: polar residues. One can recognise a DRBM 4 domain in the interval 711–781 (NPITKLIQLQ…AQALFELLEA (71 aa)). The interval 855–948 (ESKEEEANKE…SNSTSNTQSA (94 aa)) is disordered. A compositionally biased stretch (low complexity) spans 864-890 (EVAVAAEENSNNSANSGDSSNSSSGDS). Residues 891–901 (QATEAASESAL) show a composition bias toward polar residues. Low complexity-rich tracts occupy residues 902 to 920 (NTST…SNVG) and 934 to 947 (NTES…NTQS). The region spanning 951–1018 (HMKEQLLYLS…ASNALKILSK (68 aa)) is the DRBM 5 domain.

As to quaternary structure, component of neuronal ribonucleoprotein complexes (RNPs) that contains at least various translational repressor and mRNA turnover proteins such as me31B, tral, Upf1, AGO2 and sometimes Fmr1. As to expression, polar granules at the posterior pole of the oocyte, and by the time the egg is laid, at the anterior pole.

The protein resides in the cytoplasm. It localises to the cytoplasmic ribonucleoprotein granule. RNA-binding protein which forms ribonucleoprotein complexes (RNPs) that play critical roles in the localization, translational repression and turnover of RNAs during embryogenesis, neurotransmission and neurogenesis. In the oocyte, essential for the localization of both the osk/oskar mRNA to the posterior pole and bcd/bicoid RNA to the anterior pole, and is therefore required for the correct anterior-posterior patterning of the developing embryo. Association with osk or bcd at their respective poles, appears to promote the formation and stabilization of the ribonucleoprotein complexes. Integral component of diverse neuritic ribonucleoprotein complexes (RNPs) that mediate the transport, translation and turnover of neuronal RNAs during neuorgenesis and the translation repression of synaptic transcripts in preparation for their dendritic targeting. This Drosophila melanogaster (Fruit fly) protein is Maternal effect protein staufen (stau).